A 122-amino-acid chain; its full sequence is Conotoxin flf14c (122 aa).

An N-terminal signal peptide occupies residues 1-22 (MGFRVLVLIVMVTTSALPFTFS). Residues 23–96 (EESGRSPFRP…AESPVGQKRW (74 aa)) constitute a propeptide that is removed on maturation. The disordered stretch occupies residues 53-89 (RADGQTPDMHQPEMRRPEMRRPEVRRPEVRQPEFAES). The segment covering 62–85 (HQPEMRRPEMRRPEVRRPEVRQPE) has biased composition (basic and acidic residues). Intrachain disulfides connect Cys-101-Cys-121 and Cys-105-Cys-117.

In terms of tissue distribution, expressed by the venom duct.

Its subcellular location is the secreted. The polypeptide is Conotoxin flf14c (Conus anabathrum floridanus (Florida cone)).